The primary structure comprises 273 residues: Progestin and adipoQ receptor family member 4 (273 aa).

Transmembrane regions (helical) follow at residues 52–72 (IYTH…TMPW), 79–99 (GWLG…SVLY), 115–135 (LLAL…LPII), 147–167 (PAAL…ALTA), 185–205 (LLVF…SLPC), and 245–265 (LLSV…LLWA).

This sequence belongs to the ADIPOR family. Interacts with CERS2 and CERS5; the interaction regulates CERS2 and CERS5 stabilities and activities and is inhibited in presence of ceramides. As to expression, relatively widely expressed in a range of tissues. Expressed in subcutaneous white adipose tissue.

Its subcellular location is the golgi apparatus membrane. Plays a role in maintaining adipose tissue function through the regulation of ceramide levels. Mediates the stability of ceramide synthetases, CERS2 and CERS5, and their activities. The protein is Progestin and adipoQ receptor family member 4 of Homo sapiens (Human).